Consider the following 235-residue polypeptide: uncharacterized protein (235 aa).

To E.coli YbeU.

This is an uncharacterized protein from Escherichia coli (strain K12).